The sequence spans 412 residues: Serine hydroxymethyltransferase (412 aa).

(6S)-5,6,7,8-tetrahydrofolate contacts are provided by residues leucine 117 and 121 to 123 (GHL). Lysine 226 carries the N6-(pyridoxal phosphate)lysine modification.

It belongs to the SHMT family. As to quaternary structure, homodimer. Pyridoxal 5'-phosphate is required as a cofactor.

The protein localises to the cytoplasm. The catalysed reaction is (6R)-5,10-methylene-5,6,7,8-tetrahydrofolate + glycine + H2O = (6S)-5,6,7,8-tetrahydrofolate + L-serine. It functions in the pathway one-carbon metabolism; tetrahydrofolate interconversion. It participates in amino-acid biosynthesis; glycine biosynthesis; glycine from L-serine: step 1/1. Its function is as follows. Catalyzes the reversible interconversion of serine and glycine with tetrahydrofolate (THF) serving as the one-carbon carrier. This reaction serves as the major source of one-carbon groups required for the biosynthesis of purines, thymidylate, methionine, and other important biomolecules. Also exhibits THF-independent aldolase activity toward beta-hydroxyamino acids, producing glycine and aldehydes, via a retro-aldol mechanism. The sequence is that of Serine hydroxymethyltransferase from Natranaerobius thermophilus (strain ATCC BAA-1301 / DSM 18059 / JW/NM-WN-LF).